The sequence spans 374 residues: Putative phosphoserine aminotransferase (374 aa).

L-glutamate is bound at residue Arg48. Pyridoxal 5'-phosphate is bound by residues 82–83 (AT), Phe106, Thr152, Asp174, and Gln197. Residue Lys198 is modified to N6-(pyridoxal phosphate)lysine. Pyridoxal 5'-phosphate is bound at residue 249 to 250 (NT).

It belongs to the class-V pyridoxal-phosphate-dependent aminotransferase family. SerC subfamily. In terms of assembly, homodimer. The cofactor is pyridoxal 5'-phosphate.

The protein localises to the cytoplasm. The catalysed reaction is O-phospho-L-serine + 2-oxoglutarate = 3-phosphooxypyruvate + L-glutamate. It carries out the reaction 4-(phosphooxy)-L-threonine + 2-oxoglutarate = (R)-3-hydroxy-2-oxo-4-phosphooxybutanoate + L-glutamate. It functions in the pathway amino-acid biosynthesis; L-serine biosynthesis; L-serine from 3-phospho-D-glycerate: step 2/3. It participates in cofactor biosynthesis; pyridoxine 5'-phosphate biosynthesis; pyridoxine 5'-phosphate from D-erythrose 4-phosphate: step 3/5. Its function is as follows. Catalyzes the reversible conversion of 3-phosphohydroxypyruvate to phosphoserine and of 3-hydroxy-2-oxo-4-phosphonooxybutanoate to phosphohydroxythreonine. The polypeptide is Putative phosphoserine aminotransferase (Mycobacterium avium (strain 104)).